Reading from the N-terminus, the 219-residue chain is Guanylate kinase (219 aa).

Positions 15-194 constitute a Guanylate kinase-like domain; it reads GLMFVLSSPS…AFAEVQSILK (180 aa). 22–29 contacts ATP; that stretch reads SPSGAGKT.

The protein belongs to the guanylate kinase family.

Its subcellular location is the cytoplasm. The catalysed reaction is GMP + ATP = GDP + ADP. Functionally, essential for recycling GMP and indirectly, cGMP. The polypeptide is Guanylate kinase (Bradyrhizobium diazoefficiens (strain JCM 10833 / BCRC 13528 / IAM 13628 / NBRC 14792 / USDA 110)).